Consider the following 41-residue polypeptide: Conotoxin Ac4.2 (41 aa).

Positions 1-11 (FDGRNAAVNER) are excised as a propeptide. At Pro-13 the chain carries 4-hydroxyproline. O-linked (HexNAc...) threonine glycans are attached at residues Thr-18 and Thr-20. Pro-29 and Pro-33 each carry 4-hydroxyproline. A Cysteine amide modification is found at Cys-40.

It belongs to the conotoxin A superfamily. Contains 3 disulfide bonds. As to expression, expressed by the venom duct.

It is found in the secreted. Probable neurotoxin with ion channel inhibitor activity. The chain is Conotoxin Ac4.2 from Conus achatinus (Little frog cone).